Consider the following 362-residue polypeptide: Tyrosine recombinase XerH (362 aa).

One can recognise a Core-binding (CB) domain in the interval 43–140 (ECLNELNQAC…ALLGLFSYID (98 aa)). Residues 170 to 357 (KLPTHLNNEE…DKQRLEEAAS (188 aa)) form the Tyr recombinase domain. Residues arginine 213, lysine 239, histidine 309, arginine 312, and histidine 335 contribute to the active site. Tyrosine 344 serves as the catalytic O-(3'-phospho-DNA)-tyrosine intermediate.

The protein belongs to the 'phage' integrase family. XerH subfamily.

It is found in the cytoplasm. Its activity is regulated as follows. FtsK is required for recombination. Functionally, site-specific tyrosine recombinase, which acts by catalyzing the cutting and rejoining of the recombining DNA molecules. Involved in chromosome segregation. May contribute to chromosome decatenation. The polypeptide is Tyrosine recombinase XerH (Helicobacter pylori (strain ATCC 700392 / 26695) (Campylobacter pylori)).